Reading from the N-terminus, the 214-residue chain is Adenylate kinase (214 aa).

Gly-10–Thr-15 is a binding site for ATP. Residues Ala-30–Val-59 form an NMP region. AMP is bound by residues Thr-31, Arg-36, Asp-57–Val-59, and Gln-92. The interval Gly-126–Asp-161 is LID. ATP is bound at residue Arg-127. Residues Arg-158 and Arg-169 each coordinate AMP. Residue Gly-198 participates in ATP binding.

The protein belongs to the adenylate kinase family. In terms of assembly, monomer.

The protein localises to the cytoplasm. It carries out the reaction AMP + ATP = 2 ADP. Its pathway is purine metabolism; AMP biosynthesis via salvage pathway; AMP from ADP: step 1/1. Functionally, catalyzes the reversible transfer of the terminal phosphate group between ATP and AMP. Plays an important role in cellular energy homeostasis and in adenine nucleotide metabolism. The protein is Adenylate kinase of Gemmatimonas aurantiaca (strain DSM 14586 / JCM 11422 / NBRC 100505 / T-27).